The sequence spans 139 residues: Large ribosomal subunit protein mL54 (139 aa).

Residues 1–50 (MPFIESMAPLSRAITRGISQFSCYSNTLVLRSSRNSSSSLVKRSYVSSRV) constitute a mitochondrion transit peptide. The span at 35–50 (NSSSSLVKRSYVSSRV) shows a compositional bias: low complexity. The tract at residues 35–74 (NSSSSLVKRSYVSSRVSPKKPQHNSDATSSAQKVANKTHT) is disordered. Positions 58 to 74 (NSDATSSAQKVANKTHT) are enriched in polar residues.

Belongs to the mitochondrion-specific ribosomal protein mL54 family. As to quaternary structure, component of the mitochondrial large ribosomal subunit (mt-LSU). Mature yeast 74S mitochondrial ribosomes consist of a small (37S) and a large (54S) subunit. The 37S small subunit contains a 15S ribosomal RNA (15S mt-rRNA) and at least 32 different proteins. The 54S large subunit contains a 21S rRNA (21S mt-rRNA) and at least 45 different proteins.

The protein resides in the mitochondrion. Its function is as follows. Component of the mitochondrial ribosome (mitoribosome), a dedicated translation machinery responsible for the synthesis of mitochondrial genome-encoded proteins, including at least some of the essential transmembrane subunits of the mitochondrial respiratory chain. The mitoribosomes are attached to the mitochondrial inner membrane and translation products are cotranslationally integrated into the membrane. mL54 may have a meiosis-specific role as it accumulates during the middle stage of sporulation. In Schizosaccharomyces pombe (strain 972 / ATCC 24843) (Fission yeast), this protein is Large ribosomal subunit protein mL54 (mrpl37).